The primary structure comprises 473 residues: Zinc finger and SCAN domain-containing protein 21 (473 aa).

Lys27 is covalently cross-linked (Glycyl lysine isopeptide (Lys-Gly) (interchain with G-Cter in SUMO2)). An SCAN box domain is found at 45–127 (RQRFRQFGYH…TLLEDLEREL (83 aa)). The segment at 127–169 (LDEPGHQVSTPPNEQKPVWEKISSSGTAKESPSSMQPQPLETS) is disordered. The span at 148-167 (ISSSGTAKESPSSMQPQPLE) shows a compositional bias: polar residues. Glycyl lysine isopeptide (Lys-Gly) (interchain with G-Cter in SUMO2) cross-links involve residues Lys221 and Lys232. Positions 244 to 272 (LENEKGTKPPLQEAGSKKGRESVPTKPTP) are disordered. Residues 258–272 (GSKKGRESVPTKPTP) show a composition bias toward basic and acidic residues. 7 C2H2-type zinc fingers span residues 277–299 (YICAECGKAFSNSSNLTKHRRTH), 305–327 (YVCTKCGKAFSHSSNLTLHYRTH), 333–354 (YDCKCGKAFGQSSDLLKHQRMH), 360–382 (YQCKDCGKAFSGKGSLIRHYRIH), 388–410 (YQCNECGKSFSQHAGLSSHQRLH), 416–438 (YKCKECGKAFNHSSNFNKHHRIH), and 444–466 (YWCHHCGKTFCSKSNLSKHQRVH). Lys349 is covalently cross-linked (Glycyl lysine isopeptide (Lys-Gly) (interchain with G-Cter in SUMO2)).

The protein belongs to the krueppel C2H2-type zinc-finger protein family.

It localises to the nucleus. In terms of biological role, strong transcriptional activator. Plays an important role in spermatogenesis; essential for the progression of meiotic prophase I in spermatocytes. In Homo sapiens (Human), this protein is Zinc finger and SCAN domain-containing protein 21 (ZSCAN21).